Reading from the N-terminus, the 96-residue chain is MSQIMYNYPAMMAHAGDMAGYAGTLQSLGADIASEQAVLSSAWQGDTGITYQGWQTQWNQALEDLVRAYQSMSGTHESNTMAMLARDGAEAAKWGG.

The protein belongs to the WXG100 family. ESAT-6 subfamily.

Its subcellular location is the secreted. This chain is ESAT-6-like protein EsxR, found in Mycobacterium bovis (strain ATCC BAA-935 / AF2122/97).